A 256-amino-acid polypeptide reads, in one-letter code: Leucyl/phenylalanyl-tRNA--protein transferase (256 aa).

Belongs to the L/F-transferase family.

It is found in the cytoplasm. The enzyme catalyses N-terminal L-lysyl-[protein] + L-leucyl-tRNA(Leu) = N-terminal L-leucyl-L-lysyl-[protein] + tRNA(Leu) + H(+). It carries out the reaction N-terminal L-arginyl-[protein] + L-leucyl-tRNA(Leu) = N-terminal L-leucyl-L-arginyl-[protein] + tRNA(Leu) + H(+). It catalyses the reaction L-phenylalanyl-tRNA(Phe) + an N-terminal L-alpha-aminoacyl-[protein] = an N-terminal L-phenylalanyl-L-alpha-aminoacyl-[protein] + tRNA(Phe). In terms of biological role, functions in the N-end rule pathway of protein degradation where it conjugates Leu, Phe and, less efficiently, Met from aminoacyl-tRNAs to the N-termini of proteins containing an N-terminal arginine or lysine. This is Leucyl/phenylalanyl-tRNA--protein transferase from Hydrogenovibrio crunogenus (strain DSM 25203 / XCL-2) (Thiomicrospira crunogena).